The sequence spans 81 residues: Probable small nuclear ribonucleoprotein G (81 aa).

The 72-residue stretch at 5 to 76 (GQPPALKKYM…VVTVEALEPV (72 aa)) folds into the Sm domain.

The protein belongs to the snRNP Sm proteins family.

Its subcellular location is the nucleus. In terms of biological role, probable common Sm protein, is found in U1 and U2 snRNPs and may be part of the spliceosome. This is Probable small nuclear ribonucleoprotein G (C29) from Medicago sativa (Alfalfa).